The primary structure comprises 679 residues: Probable metal-nicotianamine transporter YSL18 (679 aa).

The segment covering 1 to 17 has biased composition (basic and acidic residues); it reads MESVGDPRDGPSTERAF. Positions 1–21 are disordered; that stretch reads MESVGDPRDGPSTERAFEGQP. A run of 14 helical transmembrane segments spans residues 29-49, 51-71, 101-121, 144-164, 211-231, 255-275, 309-329, 379-399, 407-427, 441-461, 497-517, 547-567, 593-613, and 627-647; these read VTLR…SVMM, LVFT…LGFF, CVVA…LLAM, FGRM…AIVP, LASL…NCGF, VGIG…GSII, VFCA…AISL, FAIS…PLMY, VAAA…GTGV, ILMF…SLVI, VIGT…FHHF, LPKY…AVCA, FLLV…VFLW, and VLAS…ALLA.

This sequence belongs to the YSL (TC 2.A.67.2) family.

The protein resides in the membrane. Its function is as follows. May be involved in the transport of nicotianamine-chelated metals. The polypeptide is Probable metal-nicotianamine transporter YSL18 (YSL18) (Oryza sativa subsp. japonica (Rice)).